We begin with the raw amino-acid sequence, 296 residues long: MAMVQPKSQKWRLLATHLLMFTFIAMILFPLLMVITISLRPGNFATGSLIPENISWEHWKLALGYSVVSPDGRVTPPPFPVMLWLWNSVKVAFITAVGIVTLSTTCAYAFARMHFRGKSTLLKGMLIFQMFPAVLSLVALYALFDRLGEYVPFIGLNTHGGVIFAYLGGIALHVWTIKGYFETIDGSLEEAAALDGATPWQAFRMVLLPLSVPILAVVFILSFIGVITEVPVASLLLRDVNNYTLAVGMQQYLNPQNYLWGDFAAAAVLSALPITIVFLVAQRWLVSGLTAGGVKG.

Topologically, residues 1–12 (MAMVQPKSQKWR) are cytoplasmic. A helical membrane pass occupies residues 13–35 (LLATHLLMFTFIAMILFPLLMVI). Over 36 to 88 (TISLRPGNFATGSLIPENISWEHWKLALGYSVVSPDGRVTPPPFPVMLWLWNS) the chain is Periplasmic. The 197-residue stretch at 85-281 (LWNSVKVAFI…LPITIVFLVA (197 aa)) folds into the ABC transmembrane type-1 domain. A helical membrane pass occupies residues 89 to 111 (VKVAFITAVGIVTLSTTCAYAFA). Residues 112–123 (RMHFRGKSTLLK) lie on the Cytoplasmic side of the membrane. A helical membrane pass occupies residues 124-143 (GMLIFQMFPAVLSLVALYAL). The Periplasmic portion of the chain corresponds to 144–152 (FDRLGEYVP). A helical transmembrane segment spans residues 153–175 (FIGLNTHGGVIFAYLGGIALHVW). Topologically, residues 176 to 205 (TIKGYFETIDGSLEEAAALDGATPWQAFRM) are cytoplasmic. The chain crosses the membrane as a helical span at residues 206 to 228 (VLLPLSVPILAVVFILSFIGVIT). The Periplasmic portion of the chain corresponds to 229–257 (EVPVASLLLRDVNNYTLAVGMQQYLNPQN). A helical membrane pass occupies residues 258-280 (YLWGDFAAAAVLSALPITIVFLV). Residues 281–296 (AQRWLVSGLTAGGVKG) lie on the Cytoplasmic side of the membrane.

This sequence belongs to the binding-protein-dependent transport system permease family. MalFG subfamily. The complex is composed of two ATP-binding proteins (MalK), two transmembrane proteins (MalG and MalF) and a solute-binding protein (MalE).

Its subcellular location is the cell inner membrane. Part of the ABC transporter complex MalEFGK involved in maltose/maltodextrin import. Probably responsible for the translocation of the substrate across the membrane. This Photorhabdus laumondii subsp. laumondii (strain DSM 15139 / CIP 105565 / TT01) (Photorhabdus luminescens subsp. laumondii) protein is Maltose/maltodextrin transport system permease protein MalG (malG).